The primary structure comprises 286 residues: Plasma membrane ascorbate-dependent reductase CYBRD1 (286 aa).

The Cytoplasmic portion of the chain corresponds to 1–7 (MAMEGYR). The chain crosses the membrane as a helical span at residues 8-32 (GFLGLLVSALLVGFLSVIFVLIWVL). The 206-residue stretch at 15–220 (SALLVGFLSV…FGALIFWIVT (206 aa)) folds into the Cytochrome b561 domain. At 33–47 (HFREGLGWDGGALEF) the chain is on the extracellular side. The chain crosses the membrane as a helical span at residues 48 to 69 (NWHPVLAVTGFVFIQGIAIIVY). Residues His50, Arg70, and Lys79 each coordinate heme b. At 70 to 78 (RLPWTWKCS) the chain is on the cytoplasmic side. L-ascorbate is bound by residues Lys79 and Lys83. A helical transmembrane segment spans residues 79–105 (KFLMKSIHAGLNAVAAILAIISVVAVF). His86 is a heme b binding site. Residues 106–118 (DYHNVRKIPHMYS) lie on the Extracellular side of the membrane. His108 is a Fe(3+) binding site. Heme b is bound by residues 115 to 118 (HMYS) and His120. The helical transmembrane segment at 119 to 144 (LHSWVGLTVLILYIQQLVVGFFIFLL) threads the bilayer. The Cytoplasmic portion of the chain corresponds to 145–151 (PWAPPSL). Arg152 serves as a coordination point for L-ascorbate. A helical transmembrane segment spans residues 152–179 (RAIVMPIHVYSGLLLFGTVIATVLMGVT). His159 and Glu180 together coordinate heme b. Over 180-197 (EKLFFVLKNPSYHSFPPE) the chain is Extracellular. A helical membrane pass occupies residues 198–222 (GVFTNTLGLLILVFGALIFWIVTRP). The Cytoplasmic segment spans residues 223-286 (QWKRPREPGS…LVDTGQRSTM (64 aa)). Residue Lys225 coordinates heme b. At Ser232 the chain carries Phosphoserine. At Thr285 the chain carries Phosphothreonine.

In terms of assembly, homodimer. It depends on heme b as a cofactor. In terms of tissue distribution, highly expressed in all regions of the small intestine and colon studied in suckling animals. However, after weaning, when iron absorption declines significantly, strong expression is retained only in the duodenum. Also expressed in respiratory epithelium.

The protein localises to the cell membrane. The protein resides in the apical cell membrane. It carries out the reaction Fe(3+)(out) + L-ascorbate(in) = monodehydro-L-ascorbate radical(in) + Fe(2+)(out) + H(+). The catalysed reaction is Cu(2+)(out) + L-ascorbate(in) = Cu(+)(out) + monodehydro-L-ascorbate radical(in) + H(+). It catalyses the reaction monodehydro-L-ascorbate radical(out) + L-ascorbate(in) = monodehydro-L-ascorbate radical(in) + L-ascorbate(out). Plasma membrane reductase that uses cytoplasmic ascorbate as an electron donor to reduce extracellular Fe(3+) into Fe(2+). Probably functions in dietary iron absorption at the brush border of duodenal enterocytes by producing Fe(2+), the divalent form of iron that can be transported into enterocytes. It is also able to reduce extracellular monodehydro-L-ascorbate and may be involved in extracellular ascorbate regeneration by erythrocytes in blood. May also act as a ferrireductase in airway epithelial cells. May also function as a cupric transmembrane reductase. The chain is Plasma membrane ascorbate-dependent reductase CYBRD1 from Rattus norvegicus (Rat).